The primary structure comprises 343 residues: Calcium/calmodulin-dependent protein kinase type 1B (343 aa).

The 256-residue stretch at 15-270 (YEIREKLGSG…CQQALQHLWI (256 aa)) folds into the Protein kinase domain. Residues 21 to 29 (LGSGAFSEV) and K44 each bind ATP. The active-site Proton acceptor is the D136. The interval 290–311 (KNFARTHWKRAFNATSFLRHIR) is calmodulin-binding. The disordered stretch occupies residues 314-343 (GQSPEGEEASRQCMTRHSHPGLGTSQSPKW). S338 bears the Phosphoserine mark.

This sequence belongs to the protein kinase superfamily. CAMK Ser/Thr protein kinase family. CaMK subfamily. Expressed at highest levels in adult brain, and expressed in embryo. In the adult brain detected at high levels in the anterior olfactory nuclei, piriform cortex, septal nuclei, bed nuclei of the stria terminalis, hippocampal pyramidal cells, dentate granule cells, amygdala, hypothalamic nuclei, parabrachial nucleus, and nucleus of the solitary tract. Expressed at lower levels in adult ovary and heart and at very low levels in testis, lung and muscle.

It is found in the cytoplasm. Its subcellular location is the nucleus. It carries out the reaction L-seryl-[protein] + ATP = O-phospho-L-seryl-[protein] + ADP + H(+). The enzyme catalyses L-threonyl-[protein] + ATP = O-phospho-L-threonyl-[protein] + ADP + H(+). Its activity is regulated as follows. Activated by Ca(2+)/calmodulin. Calcium/calmodulin-dependent protein kinase belonging to a proposed calcium-triggered signaling cascade. In vitro phosphorylates CREB1 and SYN1/synapsin I. Phosphorylates and activates CAMK1. The polypeptide is Calcium/calmodulin-dependent protein kinase type 1B (Pnck) (Mus musculus (Mouse)).